A 266-amino-acid chain; its full sequence is Putative cysteine-rich repeat secretory protein 20 (266 aa).

Residues Met1–Ser33 form the signal peptide. 2 Gnk2-homologous domains span residues Tyr40–Asn142 and Tyr148–Phe261.

This sequence belongs to the cysteine-rich repeat secretory protein family.

Its subcellular location is the secreted. The polypeptide is Putative cysteine-rich repeat secretory protein 20 (CRRSP20) (Arabidopsis thaliana (Mouse-ear cress)).